Consider the following 333-residue polypeptide: Glycerol-3-phosphate dehydrogenase [NAD(P)+] (333 aa).

NADPH-binding residues include W13, K33, and K108. Residues K108 and G138 each coordinate sn-glycerol 3-phosphate. S142 provides a ligand contact to NADPH. Residues K193, D246, S256, R257, and N258 each coordinate sn-glycerol 3-phosphate. The active-site Proton acceptor is the K193. An NADPH-binding site is contributed by R257. V281 and E283 together coordinate NADPH.

This sequence belongs to the NAD-dependent glycerol-3-phosphate dehydrogenase family.

Its subcellular location is the cytoplasm. The catalysed reaction is sn-glycerol 3-phosphate + NAD(+) = dihydroxyacetone phosphate + NADH + H(+). The enzyme catalyses sn-glycerol 3-phosphate + NADP(+) = dihydroxyacetone phosphate + NADPH + H(+). Its pathway is membrane lipid metabolism; glycerophospholipid metabolism. Functionally, catalyzes the reduction of the glycolytic intermediate dihydroxyacetone phosphate (DHAP) to sn-glycerol 3-phosphate (G3P), the key precursor for phospholipid synthesis. This chain is Glycerol-3-phosphate dehydrogenase [NAD(P)+], found in Bifidobacterium longum subsp. infantis (strain ATCC 15697 / DSM 20088 / JCM 1222 / NCTC 11817 / S12).